Here is a 291-residue protein sequence, read N- to C-terminus: Ribosomal RNA small subunit methyltransferase H (291 aa).

S-adenosyl-L-methionine-binding positions include 31-33 (GGY), aspartate 49, phenylalanine 76, aspartate 97, and glutamine 104.

Belongs to the methyltransferase superfamily. RsmH family.

Its subcellular location is the cytoplasm. It catalyses the reaction cytidine(1402) in 16S rRNA + S-adenosyl-L-methionine = N(4)-methylcytidine(1402) in 16S rRNA + S-adenosyl-L-homocysteine + H(+). In terms of biological role, specifically methylates the N4 position of cytidine in position 1402 (C1402) of 16S rRNA. The protein is Ribosomal RNA small subunit methyltransferase H of Anaplasma marginale (strain St. Maries).